A 1254-amino-acid chain; its full sequence is Structural polyprotein (1254 aa).

The host transcription inhibition stretch occupies residues 43 to 77; it reads LQAQQMQQLISAVSALTTKQNVKAPKGQRQKKQQK. The tract at residues 60-113 is disordered; that stretch reads TKQNVKAPKGQRQKKQQKPKEKKENQKKKPTQKKKQQQKPKPQAKKKKPGRRER. A Nuclear localization signal motif is present at residues 70–108; the sequence is QRQKKQQKPKEKKENQKKKPTQKKKQQQKPKPQAKKKKP. Residues 84-110 are compositionally biased toward basic residues; that stretch reads NQKKKPTQKKKQQQKPKPQAKKKKPGR. A binding to the viral RNA region spans residues 95 to 123; that stretch reads QQQKPKPQAKKKKPGRRERMCMKIENDCI. The segment at 108 to 122 is ribosome-binding; it reads PGRRERMCMKIENDC. The cysteines at positions 122 and 137 are disulfide-linked. The Peptidase S3 domain maps to 122–270; it reads CIFEVKLDGK…RVTPEGTEEW (149 aa). Residue His-148 is the Charge relay system of the active site. The Nuclear export signal signature appears at 153-163; that stretch reads IDNPDLAKLTY. The interval 164–169 is interaction with spike glycoprotein E2; that stretch reads KKSSKY. The active-site Charge relay system is the Asp-170. The tract at residues 192 to 202 is dimerization of the capsid protein; it reads PEGHYNWHHGA. The active-site Charge relay system is Ser-222. The segment at 228–232 is dimerization of the capsid protein; sequence DNKGR. The interval 271–282 is functions as an uncleaved signal peptide for the precursor of protein E3/E2; sequence SAALMMCILANT. At 271–694 the chain is on the extracellular side; the sequence is SAALMMCILA…PHEIIQYYYG (424 aa). Disulfide bonds link Cys-277/Cys-286, Cys-291/Cys-295, and Cys-294/Cys-326. A glycan (N-linked (GlcNAc...) asparagine; by host) is linked at Asn-281. N-linked (GlcNAc...) asparagine; by host glycosylation is present at Asn-328. Cystine bridges form between Cys-353–Cys-459, Cys-356–Cys-362, Cys-425–Cys-439, Cys-487–Cys-599, Cys-535–Cys-559, and Cys-537–Cys-554. 2 interaction with host Mxra8 receptor regions span residues 360–363 and 396–398; these read YFCY and HAH. The tract at residues 518-521 is interaction with host Mxra8 receptor; that stretch reads TAGN. Asn-534 is a glycosylation site (N-linked (GlcNAc...) asparagine; by host). The interaction with host Mxra8 receptor stretch occupies residues 550–556; the sequence is TINTCKI. Residue Asn-596 is glycosylated (N-linked (GlcNAc...) asparagine; by host). A helical transmembrane segment spans residues 695–715; it reads LYPAATIAAVSGASLMALLTL. Topologically, residues 716 to 756 are cytoplasmic; that stretch reads AATCCMLATARRKCLTPYALTPGAVVPLTLGLLCCAPRANA. Cys-719 is lipidated: S-palmitoyl cysteine; by host. The tract at residues 724-728 is interaction with the capsid protein; it reads TARRK. S-palmitoyl cysteine; by host attachment occurs at residues Cys-729, Cys-749, and Cys-750. A transient transmembrane before p62-6K protein processing region spans residues 729-749; the sequence is CLTPYALTPGAVVPLTLGLLC. Cys-729 and Cys-750 are oxidised to a cystine. At 757-771 the chain is on the extracellular side; it reads ASFAETMAYLWDENK. A helical membrane pass occupies residues 772–792; it reads TLFWMEFAAPAAALALLACCI. A topological domain (cytoplasmic) is located at residue Lys-793. Residues 794-814 form a helical membrane-spanning segment; it reads SLICCCKPFSFLVLLSLGASA. Residues 815 to 1231 lie on the Extracellular side of the membrane; sequence KAYEHTATIP…AMTWVQRLAS (417 aa). 4 disulfide bridges follow: Cys-865/Cys-930, Cys-878/Cys-910, Cys-879/Cys-912, and Cys-884/Cys-894. The segment at 900–917 is E1 fusion peptide loop; it reads VYPFMWGGAYCFCDSENT. Residue Asn-957 is glycosylated (N-linked (GlcNAc...) asparagine; by host). Disulfide bonds link Cys-1075–Cys-1087, Cys-1117–Cys-1192, Cys-1122–Cys-1196, and Cys-1144–Cys-1186. The chain crosses the membrane as a helical span at residues 1232 to 1252; sequence GLGGLALIAVVVLVLVTCITM. Cys-1249 carries the S-palmitoyl cysteine; by host lipid modification. Cys-1249 carries S-stearoyl cysteine; by host lipidation. The Cytoplasmic portion of the chain corresponds to 1253 to 1254; that stretch reads RR.

Homodimer. Homomultimer. Interacts with host karyopherin KPNA4; this interaction allows the nuclear import of the viral capsid protein. Interacts with spike glycoprotein E2. Interacts with host IRAK1; the interaction leads to inhibition of IRAK1-dependent signaling. As to quaternary structure, the precursor of protein E3/E2 and E1 form a heterodimer shortly after synthesis. In terms of assembly, interacts with spike glycoprotein E2. The precursor of protein E3/E2 and E1 form a heterodimer shortly after synthesis. Processing of the precursor of protein E3/E2 into E2 and E3 results in a heterodimer of the spike glycoproteins E2 and E1. Spike at virion surface are constituted of a trimer of E2-E1 heterodimers. After target cell attachment and endocytosis, E1 change conformation to form homotrimers. Interacts with 6K protein. E1/E2 heterodimer interacts with host LDLR. Interacts with spike glycoprotein E1. Processing of the precursor of protein E3/E2 into E2 and E3 results in a heterodimer of the spike glycoproteins E2 and E1. Spike at virion surface are constituted of a trimer of E2-E1 heterodimers. Interacts with 6K protein. Interacts with host MXRA8; this interaction mediates virus entry. As to quaternary structure, oligomer. Interacts with spike glycoprotein E1. Interacts with spike glycoprotein E2. Post-translationally, structural polyprotein: Specific enzymatic cleavages in vivo yield mature proteins. Capsid protein is auto-cleaved during polyprotein translation, unmasking a signal peptide at the N-terminus of the precursor of E3/E2. The remaining polyprotein is then targeted to the host endoplasmic reticulum, where host signal peptidase cleaves it into pE2, 6K and E1 proteins. pE2 is further processed to mature E3 and E2 by host furin in trans-Golgi vesicle. In terms of processing, palmitoylated via thioester bonds. These palmitoylations may induce disruption of the C-terminus transmembrane. This would result in the reorientation of E2 C-terminus from lumenal to cytoplasmic side. N-glycosylated. Post-translationally, palmitoylated via thioester bonds.

Its subcellular location is the virion. The protein localises to the host cytoplasm. The protein resides in the host cell membrane. It localises to the host nucleus. It is found in the virion membrane. Its subcellular location is the host Golgi apparatus. The protein localises to the host trans-Golgi network. The protein resides in the host endoplasmic reticulum. The enzyme catalyses Autocatalytic release of the core protein from the N-terminus of the togavirus structural polyprotein by hydrolysis of a -Trp-|-Ser- bond.. Its function is as follows. Forms an icosahedral capsid with a T=4 symmetry composed of 240 copies of the capsid protein surrounded by a lipid membrane through which penetrate 80 spikes composed of trimers of E1-E2 heterodimers. The capsid protein binds to the viral RNA genome at a site adjacent to a ribosome binding site for viral genome translation following genome release. Possesses a protease activity that results in its autocatalytic cleavage from the nascent structural protein. Following its self-cleavage, the capsid protein transiently associates with ribosomes, and within several minutes the protein binds to viral RNA and rapidly assembles into icosahedric core particles. The resulting nucleocapsid eventually associates with the cytoplasmic domain of the spike glycoprotein E2 at the cell membrane, leading to budding and formation of mature virions. In case of infection, new virions attach to target cells and after clathrin-mediated endocytosis their membrane fuses with the host endosomal membrane. This leads to the release of the nucleocapsid into the cytoplasm, followed by an uncoating event necessary for the genomic RNA to become accessible. The uncoating might be triggered by the interaction of capsid proteins with ribosomes. Binding of ribosomes would release the genomic RNA since the same region is genomic RNA-binding and ribosome-binding. Specifically inhibits interleukin-1 receptor-associated kinase 1/IRAK1-dependent signaling during viral entry, representing a means by which the alphaviruses may evade innate immune detection and activation prior to viral gene expression. Functionally, provides the signal sequence for the translocation of the precursor of protein E3/E2 to the host endoplasmic reticulum. Furin-cleaved E3 remains associated with spike glycoprotein E1 and mediates pH protection of the latter during the transport via the secretory pathway. After virion release from the host cell, the assembly protein E3 is gradually released in the extracellular space. In terms of biological role, plays a role in viral attachment to target host cell, by binding to the cell receptor MXRA8. The host LDLR may also act as a cell receptor for viral entry. Synthesized as a p62 precursor which is processed by furin at the cell membrane just before virion budding, giving rise to E2-E1 heterodimer. The p62-E1 heterodimer is stable, whereas E2-E1 is unstable and dissociate at low pH. p62 is processed at the last step, presumably to avoid E1 fusion activation before its final export to cell surface. E2 C-terminus contains a transitory transmembrane that would be disrupted by palmitoylation, resulting in reorientation of the C-terminal tail from lumenal to cytoplasmic side. This step is critical since E2 C-terminus is involved in budding by interacting with capsid proteins. This release of E2 C-terminus in cytoplasm occurs lately in protein export, and precludes premature assembly of particles at the endoplasmic reticulum membrane. Acts as a viroporin that participates in virus glycoprotein processing and transport to the plasma membrane, cell permeabilization and budding of viral particles. The cation channel is permeable to Na(+)&gt;K(+)&gt;Ca(2+) in vitro. Disrupts the calcium homeostasis of the cell, probably at the endoplasmic reticulum level. This leads to cytoplasmic calcium elevation. Because of its lipophilic properties, the 6K protein is postulated to influence the selection of lipids that interact with the transmembrane domains of the glycoproteins, which, in turn, affects the deformability of the bilayer required for the extreme curvature that occurs as budding proceeds. Present in low amount in virions, about 3% compared to viral glycoproteins. Its function is as follows. Class II viral fusion protein. Fusion activity is inactive as long as E1 is bound to E2 in mature virion. After virus attachment to target cell via host MXRA8 and endocytosis, acidification of the endosome induce dissociation of E1/E2 heterodimer and concomitant trimerization of the E1 subunits. This E1 trimer is fusion active, and promotes release of viral nucleocapsid in cytoplasm after endosome and viral membrane fusion. Efficient fusion requires the presence of cholesterol and sphingolipid in the target membrane. This chain is Structural polyprotein, found in Aedes (Common banded mosquito).